The chain runs to 414 residues: Secernin-1 (414 aa).

It belongs to the peptidase C69 family. Secernin subfamily.

The protein resides in the cytoplasm. In terms of biological role, regulates exocytosis in mast cells. Increases both the extent of secretion and the sensitivity of mast cells to stimulation with calcium. The sequence is that of Secernin-1 (Scrn1) from Rattus norvegicus (Rat).